A 225-amino-acid polypeptide reads, in one-letter code: Probable iron export ATP-binding protein FetA (225 aa).

One can recognise an ABC transporter domain in the interval 8–225 (LQLQNVGYLA…EMQEARYELA (218 aa)). ATP is bound at residue 40–47 (GPSGCGKS).

The protein belongs to the ABC transporter superfamily. The complex is composed of two ATP-binding proteins (FetA) and two transmembrane proteins (FetB).

Its subcellular location is the cell inner membrane. Its function is as follows. Part of the ABC transporter complex FetAB, which is probably involved in iron export and enhances resistance to H(2)O(2)-mediated oxidative stress. Probably responsible for energy coupling to the transport system. The sequence is that of Probable iron export ATP-binding protein FetA (fetA) from Escherichia coli (strain K12).